Here is a 1155-residue protein sequence, read N- to C-terminus: MHC class II transactivator (1155 aa).

The segment at Ala-171–Ile-210 is required for acetyltransferase activity. Disordered stretches follow at residues Gly-217–Lys-237 and Ser-297–Pro-357. Residues Arg-224–Ser-233 show a composition bias toward basic and acidic residues. In terms of domain architecture, NACHT spans Gln-439–Gln-749. Residue Gly-445–Ser-452 participates in GTP binding. LRR repeat units follow at residues Ser-1010–Ser-1033, Ala-1041–Glu-1062, Ser-1070–Gln-1091, and Ser-1098–Ser-1119.

As to quaternary structure, interacts with ZXDA and ZXDC. Interacts with PML (isoform PML-2). Interacts with TAF7; interaction inhibits CIITA acetyltransferase activity, thereby repressing transcription. Post-translationally, autophosphorylated, affecting interaction with TAF7. In terms of tissue distribution, expressed at very high levels in dendritic cells, at very low levels in spleen and thymus and is not detected in other tissues. Detected at high levels in spleen and tonsil as well as in a number of B-lymphocyte cell lines, and at very low levels in dendritic cells.

It is found in the nucleus. Its subcellular location is the PML body. The catalysed reaction is L-seryl-[protein] + ATP = O-phospho-L-seryl-[protein] + ADP + H(+). It catalyses the reaction L-threonyl-[protein] + ATP = O-phospho-L-threonyl-[protein] + ADP + H(+). Functionally, essential for transcriptional activity of the HLA class II promoter; activation is via the proximal promoter. Does not bind DNA. May act in a coactivator-like fashion through protein-protein interactions by contacting factors binding to the proximal MHC class II promoter, to elements of the transcription machinery, or both. Alternatively it may activate HLA class II transcription by modifying proteins that bind to the MHC class II promoter. Also mediates enhanced MHC class I transcription, the promoter element requirements for CIITA-mediated transcription are distinct from those of constitutive MHC class I transcription, and CIITA can functionally replace TAF1 at these genes. Activates CD74 transcription. Exhibits intrinsic GTP-stimulated acetyltransferase activity. Exhibits serine/threonine protein kinase activity: phosphorylates the TFIID component TAF7, the RAP74 subunit of the general transcription factor TFIIF, histone H2B at 'Ser-37' and other histones. The protein is MHC class II transactivator of Mus musculus (Mouse).